The following is a 285-amino-acid chain: Undecaprenyl-diphosphatase (285 aa).

Helical transmembrane passes span 40–60, 92–112, 122–142, 159–179, 197–217, 233–253, and 259–279; these read DELL…LLYF, LCIL…ENFI, SVYA…WADA, FLIG…RSGI, FSML…LLGL, LIVA…LMAL, and FLPF…TSPI.

This sequence belongs to the UppP family.

It is found in the cell inner membrane. The catalysed reaction is di-trans,octa-cis-undecaprenyl diphosphate + H2O = di-trans,octa-cis-undecaprenyl phosphate + phosphate + H(+). Its function is as follows. Catalyzes the dephosphorylation of undecaprenyl diphosphate (UPP). Confers resistance to bacitracin. This Hyphomonas neptunium (strain ATCC 15444) protein is Undecaprenyl-diphosphatase.